A 155-amino-acid polypeptide reads, in one-letter code: Protein SprT-like (155 aa).

A SprT-like domain is found at 7-145 (QRHMEEVSLQ…GSCGGKLIQT (139 aa)). A Zn(2+)-binding site is contributed by His67. The active site involves Glu68. Residue His71 participates in Zn(2+) binding.

This sequence belongs to the SprT family. The cofactor is Zn(2+).

Its subcellular location is the cytoplasm. The protein is Protein SprT-like of Listeria monocytogenes serotype 4b (strain CLIP80459).